We begin with the raw amino-acid sequence, 310 residues long: Putative RING-H2 finger protein ATL53 (310 aa).

A helical membrane pass occupies residues 62–82; the sequence is VIAIFGIFATAFLLAAYYTLV. The RING-type; atypical zinc finger occupies 155–197; it reads CSICLGEFNEDESLRLLPKCNHTFHVVCIDRWLKSHSNCPLCR.

The protein belongs to the RING-type zinc finger family. ATL subfamily.

The protein resides in the membrane. The catalysed reaction is S-ubiquitinyl-[E2 ubiquitin-conjugating enzyme]-L-cysteine + [acceptor protein]-L-lysine = [E2 ubiquitin-conjugating enzyme]-L-cysteine + N(6)-ubiquitinyl-[acceptor protein]-L-lysine.. The protein operates within protein modification; protein ubiquitination. The polypeptide is Putative RING-H2 finger protein ATL53 (ATL53) (Arabidopsis thaliana (Mouse-ear cress)).